A 287-amino-acid chain; its full sequence is Shikimate dehydrogenase (NADP(+)) (287 aa).

Residues 20 to 22 (SRS) and threonine 67 contribute to the shikimate site. The active-site Proton acceptor is lysine 71. Glutamate 84 contacts NADP(+). Positions 93 and 108 each coordinate shikimate. NADP(+)-binding positions include 132-136 (GAGGA) and methionine 226. Residue tyrosine 228 participates in shikimate binding. Position 250 (glycine 250) interacts with NADP(+).

This sequence belongs to the shikimate dehydrogenase family. Homodimer.

It catalyses the reaction shikimate + NADP(+) = 3-dehydroshikimate + NADPH + H(+). Its pathway is metabolic intermediate biosynthesis; chorismate biosynthesis; chorismate from D-erythrose 4-phosphate and phosphoenolpyruvate: step 4/7. Functionally, involved in the biosynthesis of the chorismate, which leads to the biosynthesis of aromatic amino acids. Catalyzes the reversible NADPH linked reduction of 3-dehydroshikimate (DHSA) to yield shikimate (SA). This Bordetella petrii (strain ATCC BAA-461 / DSM 12804 / CCUG 43448) protein is Shikimate dehydrogenase (NADP(+)).